We begin with the raw amino-acid sequence, 291 residues long: 2-dehydro-3-deoxyphosphooctonate aldolase 2 (291 aa).

Residue Ala2 is modified to N-acetylalanine.

Belongs to the KdsA family. As to expression, expressed in roots, apical meristem, emerging leaves, hydathodes of young leaves, styles of mature flowers and funicules of mature siliques.

Its subcellular location is the cytoplasm. The enzyme catalyses D-arabinose 5-phosphate + phosphoenolpyruvate + H2O = 3-deoxy-alpha-D-manno-2-octulosonate-8-phosphate + phosphate. In terms of biological role, catalyzes the stereospecific condensation of D-arabinose 5-phosphate and phosphoenolpyruvate to form 3-deoxy-D-manno-octulosonate 8-phosphate (KDO-8-phosphate) and inorganic phosphate. Involved in the biosynthesis of 3-deoxy-D-manno-octulosonate (KDO) which is an indispensable component of rhamnogalacturonan II (RG-II), a structurally complex pectic polysaccharide of the primary cell wall. RG-II is essential for the cell wall integrity of rapidly growing tissues and pollen tube growth and elongation. This Arabidopsis thaliana (Mouse-ear cress) protein is 2-dehydro-3-deoxyphosphooctonate aldolase 2 (KDSA2).